A 459-amino-acid polypeptide reads, in one-letter code: Probable acetate kinase (459 aa).

Asparagine 9 lines the Mg(2+) pocket. Lysine 16 contributes to the ATP binding site. Arginine 100 lines the substrate pocket. Catalysis depends on aspartate 156, which acts as the Proton donor/acceptor. ATP is bound by residues 216–220 (HLGSG) and 299–301 (DFR). The disordered stretch occupies residues 308-338 (TTTSSPTPSPNPNPNPNPDPNPDPNPDPQNQ). The segment covering 314-334 (TPSPNPNPNPNPDPNPDPNPD) has biased composition (pro residues). Glutamate 441 contributes to the Mg(2+) binding site.

The protein belongs to the acetokinase family. It depends on Mg(2+) as a cofactor.

The enzyme catalyses acetate + ATP = acetyl phosphate + ADP. It participates in metabolic intermediate biosynthesis; acetyl-CoA biosynthesis; acetyl-CoA from acetate: step 1/2. This chain is Probable acetate kinase, found in Chaetomium globosum (strain ATCC 6205 / CBS 148.51 / DSM 1962 / NBRC 6347 / NRRL 1970) (Soil fungus).